Here is a 79-residue protein sequence, read N- to C-terminus: Cell division protein ZapB (79 aa).

Residues 1–78 (MSLEALDQLQ…LNSLLGKMDD (78 aa)) are a coiled coil.

Belongs to the ZapB family. In terms of assembly, homodimer. The ends of the coiled-coil dimer bind to each other, forming polymers. Interacts with FtsZ.

It is found in the cytoplasm. Non-essential, abundant cell division factor that is required for proper Z-ring formation. It is recruited early to the divisome by direct interaction with FtsZ, stimulating Z-ring assembly and thereby promoting cell division earlier in the cell cycle. Its recruitment to the Z-ring requires functional FtsA or ZipA. The sequence is that of Cell division protein ZapB from Hamiltonella defensa subsp. Acyrthosiphon pisum (strain 5AT).